A 460-amino-acid polypeptide reads, in one-letter code: Probable Xaa-Pro aminopeptidase PEPP (460 aa).

D256, D267, E390, and E430 together coordinate Mn(2+).

It belongs to the peptidase M24B family. Mn(2+) serves as cofactor.

The enzyme catalyses Release of any N-terminal amino acid, including proline, that is linked to proline, even from a dipeptide or tripeptide.. Functionally, catalyzes the removal of a penultimate prolyl residue from the N-termini of peptides. The chain is Probable Xaa-Pro aminopeptidase PEPP (PEPP) from Podospora anserina (strain S / ATCC MYA-4624 / DSM 980 / FGSC 10383) (Pleurage anserina).